Reading from the N-terminus, the 312-residue chain is MTKIIFMGTPAFSVPILEQLASTYDVIAVVTQPDRPVGRKRILTPPPVKKAALELAIPVFQPEKLRTSSELNELIALEADLLVTAAYGQILPNSLLESPKHGAINVHASLLPEYRGGAPVHYALLDGKTETGVTIMYMVEKLDAGDMISQRKIPITEADNTGTMFDKLSKLGAELLMDTLPDFLAGKITAIAQDPEKVTFARNISREQEKIDWTQPGRTIFNQIRGLSPWPVAYTTLEEKPFKIWEATYDDTKVEGEPGTILMDKTSLKIIAGDGTLIVPTVIQPAGKPKMDVHSFMSGAGRNLSKSTRFGE.

109–112 (SLLP) is a binding site for (6S)-5,6,7,8-tetrahydrofolate.

This sequence belongs to the Fmt family.

It catalyses the reaction L-methionyl-tRNA(fMet) + (6R)-10-formyltetrahydrofolate = N-formyl-L-methionyl-tRNA(fMet) + (6S)-5,6,7,8-tetrahydrofolate + H(+). In terms of biological role, attaches a formyl group to the free amino group of methionyl-tRNA(fMet). The formyl group appears to play a dual role in the initiator identity of N-formylmethionyl-tRNA by promoting its recognition by IF2 and preventing the misappropriation of this tRNA by the elongation apparatus. The chain is Methionyl-tRNA formyltransferase from Listeria welshimeri serovar 6b (strain ATCC 35897 / DSM 20650 / CCUG 15529 / CIP 8149 / NCTC 11857 / SLCC 5334 / V8).